Here is a 326-residue protein sequence, read N- to C-terminus: Phospholipid scramblase 4 (326 aa).

A disordered region spans residues 1-32 (MSGLVPTAPEQPTEEMENQIKSPTAVPDAPPD). A proline-rich domain (PRD) region spans residues 1 to 94 (MSGLVPTAPE…PVTNQPAPIM (94 aa)). The Cytoplasmic portion of the chain corresponds to 1–299 (MSGLVPTAPE…IRFPLALDVK (299 aa)). The short motif at 18–25 (NQIKSPTA) is the SH3-binding 1 element. Residues 30–33 (PPDY) carry the PPxY motif motif. Positions 41 to 49 (PAGPVASPS) match the SH3-binding 2 motif. Phosphotyrosine; by ABL is present on residues Tyr79 and Tyr84. An SH3-binding 3 motif is present at residues 94–102 (MWMAGPAPV). 5 S-palmitoyl cysteine lipidation sites follow: Cys193, Cys194, Cys195, Cys197, and Cys198. A helical transmembrane segment spans residues 300-316 (MKAMIFGSCFLIDFMYF). The Extracellular segment spans residues 317 to 326 (ERPPPRRMSR).

This sequence belongs to the phospholipid scramblase family. As to quaternary structure, interacts with PDCD6. Interacts with KPNA2; this interaction mediates the nucleus import of PLSCR4. The cofactor is Ca(2+). It depends on Mg(2+) as a cofactor. Zn(2+) is required as a cofactor.

Its subcellular location is the cell membrane. The protein localises to the nucleus. It catalyses the reaction a 1,2-diacyl-sn-glycero-3-phosphocholine(in) = a 1,2-diacyl-sn-glycero-3-phosphocholine(out). The enzyme catalyses a 1,2-diacyl-sn-glycero-3-phospho-L-serine(in) = a 1,2-diacyl-sn-glycero-3-phospho-L-serine(out). Its function is as follows. Catalyzes metal ion-induced ATP-independent rapid bidirectional and non-specific movement of phospholipids (lipid scrambling or lipid flip-flop) between the inner and outer leaflet of the plasma membrane and participates in the redistribution of phospholipids between membrane leaflets. Metal ions bind to the calcium-binding site and induce conformation change in the protein. Has a greater affi nity for Ca(2+) than Mg(2+) and Zn(2+). In Mus musculus (Mouse), this protein is Phospholipid scramblase 4.